Consider the following 166-residue polypeptide: Large ribosomal subunit protein uL11 (166 aa).

It belongs to the universal ribosomal protein uL11 family.

This Dictyostelium discoideum (Social amoeba) protein is Large ribosomal subunit protein uL11 (rpl12).